Reading from the N-terminus, the 392-residue chain is Cyclic AMP receptor 1 (392 aa).

The Extracellular segment spans residues 1–13 (MGLLDGNPANETS). The N-linked (GlcNAc...) asparagine glycan is linked to asparagine 10. Residues 14–33 (LVLLLFADFSSMLGCMAVLI) form a helical membrane-spanning segment. Topologically, residues 34–47 (GFWRLKLLRNHVTK) are cytoplasmic. A helical transmembrane segment spans residues 48-68 (VIACFCATSFCKDFPSTILTL). Topologically, residues 69 to 83 (TNTAVNGGFPCYLYA) are extracellular. Residues 84-109 (IVITYGSFACWLWTLCLAISIYMLIV) form a helical membrane-spanning segment. The Cytoplasmic segment spans residues 110–120 (KREPEPERFEK). A helical membrane pass occupies residues 121–139 (YYYLLCWGLPLISTIVMLA). Residues 140 to 162 (KNTVQFVGNWCWIGVSFTGYRFG) lie on the Extracellular side of the membrane. Residues 163 to 181 (LFYGPFLFIWAISAVLVGL) form a helical membrane-spanning segment. The Cytoplasmic portion of the chain corresponds to 182–205 (TSRYTYVVIHNGVSDNKEKHLTYQ). The chain crosses the membrane as a helical span at residues 206–224 (FKLINYIIVFLVCWVFAVV). Topologically, residues 225–235 (NRIVNGLNMFP) are extracellular. The helical transmembrane segment at 236 to 260 (PALNILHTYLSVSHGFWASVTFIYN) threads the bilayer. The Cytoplasmic segment spans residues 261-392 (NPLMWRYFGA…STSTNGQGNN (132 aa)). 2 disordered regions span residues 292 to 324 (NKNN…VQCS) and 339 to 392 (VNNQ…QGNN). The span at 298-310 (PSPYSSSRGTSGK) shows a compositional bias: polar residues. Phosphoserine occurs at positions 299, 302, 303, 304, 308, 360, 361, 362, 363, 364, 366, 367, and 368. Residues 340–367 (NNQQNLNNNYGLQQNYNDEGSSSSSLSS) are compositionally biased toward low complexity. A compositionally biased stretch (polar residues) spans 375–392 (VEMQNIQISTSTNGQGNN).

This sequence belongs to the G-protein coupled receptor 5 family. Post-translationally, C-terminal Ser or Thr residues may be phosphorylated.

Its subcellular location is the membrane. Its function is as follows. Receptor for cAMP. Coordinates the aggregation of individual cells into a multicellular organism and regulates the expression of a large number of developmentally regulated genes. The activity of this receptor is mediated by G proteins. This Dictyostelium discoideum (Social amoeba) protein is Cyclic AMP receptor 1 (carA-1).